A 250-amino-acid chain; its full sequence is ATP synthase subunit a (250 aa).

The next 6 helical transmembrane spans lie at 26-46, 84-104, 114-134, 143-163, 193-213, and 216-236; these read FTNA…FLYF, FFPL…LGMF, IIVT…YGFY, VFVP…IEII, FVAS…LPLI, and VALT…FAVL.

This sequence belongs to the ATPase A chain family. As to quaternary structure, F-type ATPases have 2 components, CF(1) - the catalytic core - and CF(0) - the membrane proton channel. CF(1) has five subunits: alpha(3), beta(3), gamma(1), delta(1), epsilon(1). CF(0) has three main subunits: a(1), b(2) and c(9-12). The alpha and beta chains form an alternating ring which encloses part of the gamma chain. CF(1) is attached to CF(0) by a central stalk formed by the gamma and epsilon chains, while a peripheral stalk is formed by the delta and b chains.

The protein resides in the cell inner membrane. Its function is as follows. Key component of the proton channel; it plays a direct role in the translocation of protons across the membrane. The sequence is that of ATP synthase subunit a from Rhizobium etli (strain ATCC 51251 / DSM 11541 / JCM 21823 / NBRC 15573 / CFN 42).